The primary structure comprises 210 residues: Na(+)-translocating NADH-quinone reductase subunit D (210 aa).

6 helical membrane passes run 14 to 34, 42 to 62, 72 to 92, 96 to 116, 131 to 151, and 178 to 198; these read PIINNNPIALQILGVCSALAV, LVMSLALTVVTAFSNLFISLI, IIVQMTIIASLVIVVDQVLQA, EIAKQLSVFVGLIITNCIVMG, FMDGIGNGLGYGAILLGVGFF, and NGLLLLPPSAFFLIGGLIWVI.

The protein belongs to the NqrDE/RnfAE family. In terms of assembly, composed of six subunits; NqrA, NqrB, NqrC, NqrD, NqrE and NqrF.

It localises to the cell inner membrane. It carries out the reaction a ubiquinone + n Na(+)(in) + NADH + H(+) = a ubiquinol + n Na(+)(out) + NAD(+). Its function is as follows. NQR complex catalyzes the reduction of ubiquinone-1 to ubiquinol by two successive reactions, coupled with the transport of Na(+) ions from the cytoplasm to the periplasm. NqrA to NqrE are probably involved in the second step, the conversion of ubisemiquinone to ubiquinol. In Shewanella denitrificans (strain OS217 / ATCC BAA-1090 / DSM 15013), this protein is Na(+)-translocating NADH-quinone reductase subunit D.